An 88-amino-acid chain; its full sequence is Arminin 1b (88 aa).

An N-terminal signal peptide occupies residues 1 to 18; the sequence is MKTVLAFLFLTFIAFTHA. Residues 19-57 constitute a propeptide that is removed on maturation; sequence ESYEDVKEEIKNEVEREIFEDLEEESDVLESNVRELNDA. Val85 is modified (valine amide).

The protein belongs to the arminin family. As to expression, expressed in entodermal epithelium along the body column.

Its subcellular location is the secreted. It localises to the target cell membrane. Its function is as follows. Antimicrobial peptide with a broad-spectrum antimicrobial activity. Keeps its antibacterial activity under a wide range of salt concentrations that mimic physiological conditions of human blood, which is surprising, since Hydra is an obligate freshwater animal with nearly no salt tolerance. Does not affect red blood cells. In Hydra vulgaris (Hydra), this protein is Arminin 1b.